The primary structure comprises 473 residues: C3a anaphylatoxin chemotactic receptor (473 aa).

The Extracellular segment spans residues 1 to 23 (MESFTADTNSTDLHSRPLFKPQD). Residue N9 is glycosylated (N-linked (GlcNAc...) asparagine). Residues 24-46 (IASMVILSLTCLLGLPGNGLVLW) traverse the membrane as a helical segment. Over 47–57 (VAGVKMKRTVN) the chain is Cytoplasmic. Residues 58 to 80 (TVWFLHLTLADFLCCLSLPFSVA) form a helical membrane-spanning segment. At 81–96 (HLILRGHWPYGLFLCK) the chain is on the extracellular side. A disulfide bond links C95 and C172. Residues 97 to 118 (LIPSVIILNMFASVFLLTAISL) form a helical membrane-spanning segment. Residues 119-139 (DRCLMVHKPIWCQNHRSVRTA) are Cytoplasmic-facing. Residues 140–160 (FAVCGCVWVVTFVMCIPVFVY) traverse the membrane as a helical segment. Residues 161-329 (RDLLVVDDYS…TPQVAITISR (169 aa)) lie on the Extracellular side of the membrane. Y174 and Y184 each carry sulfotyrosine. N201 carries an N-linked (GlcNAc...) asparagine glycan. A disordered region spans residues 233–252 (FHTSPEDPFSQDSASQQPHY). A Sulfotyrosine modification is found at Y308. Residues 330–349 (LVVGFLVPFFIMITCYSLIV) traverse the membrane as a helical segment. At 350–366 (FRMRKTNLTKSRNKTLR) the chain is on the cytoplasmic side. The chain crosses the membrane as a helical span at residues 367–389 (VAVAVVTVFFVCWIPYHIVGILL). Topologically, residues 390–406 (VITDQESALREVVLPWD) are extracellular. A helical transmembrane segment spans residues 407–427 (HMSIALASANSCFNPFLYALL). Residues 428–473 (GKDFRKKARQSVKGILEAAFSEELTHSTSCTQDKAPSKRNHMSTDV) lie on the Cytoplasmic side of the membrane. S448 carries the phosphoserine modification. T452 is modified (phosphothreonine).

Belongs to the G-protein coupled receptor 1 family. Interacts with VGF-derived peptide TLQP-21.

The protein localises to the cell membrane. In terms of biological role, receptor for the chemotactic and inflammatory peptide anaphylatoxin C3a. This receptor stimulates chemotaxis, granule enzyme release and superoxide anion production. The polypeptide is C3a anaphylatoxin chemotactic receptor (C3ar1) (Rattus norvegicus (Rat)).